The primary structure comprises 372 residues: MSNQHMLLLFNLLPVGSNISTWWNFGSMLLTCLALQTMTGFFLAIHYTANINLAFSSIVHITRDVPYGWMMQNLHAIGASMFFICIYIHIARGLYYGSFLNKNVWLSGTTLLIILMATAFFGYVLPWGQMSFWAATVITNLLTAVPYIGTELTNWLWGGFSINDPTLTRFFALHFILPFTIISMSSIHIMLLHTEGSSNPLGTNSDIDKIPFHPYHSHKDMLMLTIMMTALFIIMSFMPNIFNDPENFSKANPLVTPQHIKPEWYFLFAYGILRSIPNKLGGTVALVLSVTILMTMPFTHTSHFRSMTFRPLMQFMFWTLVATFITITWAATKPVEPPFTTIGQATAILYFTFFIMNPLLGWLENKISITNM.

Transmembrane regions (helical) follow at residues 25 to 45 (FGSM…FLAI), 69 to 90 (WMMQ…YIHI), 105 to 125 (WLSG…GYVL), and 170 to 190 (FFAL…IHIM). H75 and H89 together coordinate heme b. Heme b-binding residues include H174 and H188. An a ubiquinone-binding site is contributed by H193. A run of 4 helical transmembrane segments spans residues 218 to 238 (HKDM…MSFM), 280 to 300 (LGGT…PFTH), 312 to 332 (LMQF…WAAT), and 339 to 358 (FTTI…IMNP).

This sequence belongs to the cytochrome b family. As to quaternary structure, the cytochrome bc1 complex contains 3 respiratory subunits (MT-CYB, CYC1 and UQCRFS1), 2 core proteins (UQCRC1 and UQCRC2) and probably 6 low-molecular weight proteins. Heme b is required as a cofactor.

It is found in the mitochondrion inner membrane. Component of the ubiquinol-cytochrome c reductase complex (complex III or cytochrome b-c1 complex) that is part of the mitochondrial respiratory chain. The b-c1 complex mediates electron transfer from ubiquinol to cytochrome c. Contributes to the generation of a proton gradient across the mitochondrial membrane that is then used for ATP synthesis. The sequence is that of Cytochrome b (MT-CYB) from Pantherophis obsoletus (Black ratsnake).